Here is a 403-residue protein sequence, read N- to C-terminus: Digeranylgeranylglycerophospholipid reductase 1 (403 aa).

A14, D33, C44, A45, G47, R98, V122, D277, G289, and I290 together coordinate FAD.

This sequence belongs to the geranylgeranyl reductase family. DGGGPL reductase subfamily. Requires FAD as cofactor.

It carries out the reaction a 2,3-bis-O-phytanyl-sn-glycerol 1-phospholipid + 8 A = a 2,3-bis-O-(geranylgeranyl)-sn-glycerol 1-phospholipid + 8 AH2. The catalysed reaction is 2,3-bis-O-(phytanyl)-sn-glycerol 1-phosphate + 8 A = 2,3-bis-O-(geranylgeranyl)-sn-glycerol 1-phosphate + 8 AH2. It catalyses the reaction CDP-2,3-bis-O-(geranylgeranyl)-sn-glycerol + 8 AH2 = CDP-2,3-bis-O-(phytanyl)-sn-glycerol + 8 A. The enzyme catalyses archaetidylserine + 8 AH2 = 2,3-bis-O-phytanyl-sn-glycero-3-phospho-L-serine + 8 A. Its pathway is membrane lipid metabolism; glycerophospholipid metabolism. Its function is as follows. Is involved in the reduction of 2,3-digeranylgeranylglycerophospholipids (unsaturated archaeols) into 2,3-diphytanylglycerophospholipids (saturated archaeols) in the biosynthesis of archaeal membrane lipids. Catalyzes the formation of archaetidic acid (2,3-di-O-phytanyl-sn-glyceryl phosphate) from 2,3-di-O-geranylgeranylglyceryl phosphate (DGGGP) via the hydrogenation of each double bond of the isoprenoid chains. Is also probably able to reduce double bonds of geranyl groups in CDP-2,3-bis-O-(geranylgeranyl)-sn-glycerol and archaetidylserine, thus acting at various stages in the biosynthesis of archaeal membrane lipids. In Methanosphaera stadtmanae (strain ATCC 43021 / DSM 3091 / JCM 11832 / MCB-3), this protein is Digeranylgeranylglycerophospholipid reductase 1.